We begin with the raw amino-acid sequence, 235 residues long: Purine nucleoside phosphorylase DeoD-type (235 aa).

His-4 serves as a coordination point for a purine D-ribonucleoside. Residues Gly-20, Arg-24, Arg-43, and 87 to 90 (RVGT) contribute to the phosphate site. Residues 179–181 (EME) and 203–204 (SD) contribute to the a purine D-ribonucleoside site. Asp-204 functions as the Proton donor in the catalytic mechanism.

It belongs to the PNP/UDP phosphorylase family. As to quaternary structure, homohexamer; trimer of homodimers.

The enzyme catalyses a purine D-ribonucleoside + phosphate = a purine nucleobase + alpha-D-ribose 1-phosphate. It catalyses the reaction a purine 2'-deoxy-D-ribonucleoside + phosphate = a purine nucleobase + 2-deoxy-alpha-D-ribose 1-phosphate. Catalyzes the reversible phosphorolytic breakdown of the N-glycosidic bond in the beta-(deoxy)ribonucleoside molecules, with the formation of the corresponding free purine bases and pentose-1-phosphate. This Clostridium perfringens (strain SM101 / Type A) protein is Purine nucleoside phosphorylase DeoD-type.